A 172-amino-acid polypeptide reads, in one-letter code: Centrin-2 (172 aa).

The interval 1 to 31 (MASNFKKANMASTTQRKRMSPKPELTEEQKQ) is disordered. A2 carries the post-translational modification N-acetylalanine. The segment at 2–25 (ASNFKKANMASTTQRKRMSPKPEL) is required for self-assembly. Phosphoserine is present on S20. A Glycyl lysine isopeptide (Lys-Gly) (interchain with G-Cter in SUMO2) cross-link involves residue K22. At T26 the chain carries Phosphothreonine. 4 EF-hand domains span residues 28–63 (EQKQ…LGFE), 64–99 (PKKE…KMSE), 101–136 (DTKE…LGEN), and 137–172 (LSDE…TSLY). Residues D41, D43, T45, T47, and E52 each contribute to the Ca(2+) site. Ca(2+) contacts are provided by D150, D152, D154, E156, and E161.

The protein belongs to the centrin family. As to quaternary structure, monomer. Homooligomer. Interacts with CCP110, SFI1. Component of the XPC complex composed of XPC, RAD23B and CETN2. Component of the nuclear pore complex (NPC)-associated TREX-2 complex (transcription and export complex 2), composed of at least GANP, 2 copies of ENY2, PCID2, SEM1/DSS1, and either centrin CETN2 or centrin CETN3. The TREX-2 complex also associates with ALYREF/ALY and with the nucleoporin NUP153. Interacts with USP49. Forms a microtubule-associated complex with POC5, POC1B and FAM161A. Interacts with CCDC15.

Its subcellular location is the cytoplasm. It is found in the cytoskeleton. The protein resides in the microtubule organizing center. The protein localises to the centrosome. It localises to the centriole. Its subcellular location is the nucleus. It is found in the nucleus envelope. The protein resides in the nuclear pore complex. Plays a fundamental role in microtubule organizing center structure and function. Required for centriole duplication and correct spindle formation. Has a role in regulating cytokinesis and genome stability via cooperation with CALM1 and CCP110. Functionally, involved in global genome nucleotide excision repair (GG-NER) by acting as component of the XPC complex. Cooperatively with RAD23B appears to stabilize XPC. In vitro, stimulates DNA binding of the XPC:RAD23B dimer. In terms of biological role, the XPC complex is proposed to represent the first factor bound at the sites of DNA damage and together with other core recognition factors, XPA, RPA and the TFIIH complex, is part of the pre-incision (or initial recognition) complex. The XPC complex recognizes a wide spectrum of damaged DNA characterized by distortions of the DNA helix such as single-stranded loops, mismatched bubbles or single-stranded overhangs. The orientation of XPC complex binding appears to be crucial for inducing a productive NER. XPC complex is proposed to recognize and to interact with unpaired bases on the undamaged DNA strand which is followed by recruitment of the TFIIH complex and subsequent scanning for lesions in the opposite strand in a 5'-to-3' direction by the NER machinery. Cyclobutane pyrimidine dimers (CPDs) which are formed upon UV-induced DNA damage esacpe detection by the XPC complex due to a low degree of structural perurbation. Instead they are detected by the UV-DDB complex which in turn recruits and cooperates with the XPC complex in the respective DNA repair. Its function is as follows. As a component of the TREX-2 complex, involved in the export of mRNAs to the cytoplasm through the nuclear pores. This is Centrin-2 (CETN2) from Bos taurus (Bovine).